A 266-amino-acid chain; its full sequence is Large ribosomal subunit protein uL4 (266 aa).

The protein belongs to the universal ribosomal protein uL4 family. In terms of assembly, part of the 50S ribosomal subunit.

One of the primary rRNA binding proteins, this protein initially binds near the 5'-end of the 23S rRNA. It is important during the early stages of 50S assembly. It makes multiple contacts with different domains of the 23S rRNA in the assembled 50S subunit and ribosome. In terms of biological role, forms part of the polypeptide exit tunnel. In Sulfurisphaera tokodaii (strain DSM 16993 / JCM 10545 / NBRC 100140 / 7) (Sulfolobus tokodaii), this protein is Large ribosomal subunit protein uL4.